We begin with the raw amino-acid sequence, 317 residues long: Acetyl-coenzyme A carboxylase carboxyl transferase subunit alpha (317 aa).

Residues 41-291 (KVDKLLRSTY…SMALDSALRD (251 aa)) enclose the CoA carboxyltransferase C-terminal domain.

It belongs to the AccA family. As to quaternary structure, acetyl-CoA carboxylase is a heterohexamer composed of biotin carboxyl carrier protein (AccB), biotin carboxylase (AccC) and two subunits each of ACCase subunit alpha (AccA) and ACCase subunit beta (AccD).

The protein localises to the cytoplasm. It carries out the reaction N(6)-carboxybiotinyl-L-lysyl-[protein] + acetyl-CoA = N(6)-biotinyl-L-lysyl-[protein] + malonyl-CoA. It participates in lipid metabolism; malonyl-CoA biosynthesis; malonyl-CoA from acetyl-CoA: step 1/1. Component of the acetyl coenzyme A carboxylase (ACC) complex. First, biotin carboxylase catalyzes the carboxylation of biotin on its carrier protein (BCCP) and then the CO(2) group is transferred by the carboxyltransferase to acetyl-CoA to form malonyl-CoA. In Paramagnetospirillum magneticum (strain ATCC 700264 / AMB-1) (Magnetospirillum magneticum), this protein is Acetyl-coenzyme A carboxylase carboxyl transferase subunit alpha.